The sequence spans 436 residues: ATP-sensitive inward rectifier potassium channel 14 (436 aa).

Over 1 to 83 (MGLARALRRL…LSDLFTTCVD (83 aa)) the chain is Cytoplasmic. The tract at residues 14–43 (LDSGDSRAGDEEEAGPGLCRNGWAPAPVQS) is disordered. S-nitrosocysteine is present on Cys-81. A helical transmembrane segment spans residues 84–110 (VRWRWMCLLFSCSFLASWLLFGLAFWL). Over 111–133 (IASLHGDLAAPPPPAPCFSHVAS) the chain is Extracellular. An intramembrane region (helical; Pore-forming) is located at residues 134 to 150 (FLAAFLFALETQTSIGY). A Selectivity filter motif is present at residues 147 to 152 (SIGYGV). Topologically, residues 151–159 (GVRSVTEEC) are extracellular. The chain crosses the membrane as a helical span at residues 160–187 (PAAVAAVVLQCIAGCVLDAFVVGAVMAK). The Cytoplasmic segment spans residues 188–436 (MAKPKKRNET…TPTLALTLPP (249 aa)). Residues 400–418 (QEEDEDDETEEGNGVETED) are compositionally biased toward acidic residues. A disordered region spans residues 400-436 (QEEDEDDETEEGNGVETEDGAASPRVLTPTLALTLPP). Residues 426–436 (LTPTLALTLPP) are compositionally biased toward low complexity.

The protein belongs to the inward rectifier-type potassium channel (TC 1.A.2.1) family. KCNJ14 subfamily. In terms of tissue distribution, expressed preferentially in retina.

It localises to the membrane. It carries out the reaction K(+)(in) = K(+)(out). With respect to regulation, channel activity is regulated by variations of cytosolic pH; channels are activated by alkaline and inhibited by acidic pH values. Inhibited by Ba(2+) and Cs(+) in a voltage-dependent manner; sensitivity to those inhibitors is lower than in other Kir channels. Its function is as follows. Inward rectifier potassium channels are characterized by a greater tendency to allow potassium to flow into the cell rather than out of it. Their voltage dependence is regulated by the concentration of extracellular potassium; as external potassium is raised, the voltage range of the channel opening shifts to more positive voltages. The sequence is that of ATP-sensitive inward rectifier potassium channel 14 (KCNJ14) from Homo sapiens (Human).